The primary structure comprises 257 residues: Pyridoxal phosphate homeostasis protein (257 aa).

Ser2 bears the N-acetylserine mark. N6-(pyridoxal phosphate)lysine is present on Lys49.

It belongs to the pyridoxal phosphate-binding protein YggS/PROSC family.

Its subcellular location is the cytoplasm. It localises to the nucleus. Its function is as follows. Pyridoxal 5'-phosphate (PLP)-binding protein, which may be involved in intracellular homeostatic regulation of pyridoxal 5'-phosphate (PLP), the active form of vitamin B6. The protein is Pyridoxal phosphate homeostasis protein of Saccharomyces cerevisiae (strain ATCC 204508 / S288c) (Baker's yeast).